The sequence spans 52 residues: Alpha-crystallin B chain (52 aa).

The protein belongs to the small heat shock protein (HSP20) family. Homodimer. Aggregates with homologous proteins, including alpha-A-crystallin and the small heat shock protein HSPB1, to form large heteromeric complexes.

Its function is as follows. May contribute to the transparency and refractive index of the lens. This chain is Alpha-crystallin B chain (CRYAB), found in Turdus merula (Common blackbird).